The following is a 360-amino-acid chain: Peptide chain release factor 1 (360 aa).

Gln235 is modified (N5-methylglutamine). Residues 284 to 304 form a disordered region; sequence KVDSERSADRKSQVGSGDRSE.

This sequence belongs to the prokaryotic/mitochondrial release factor family. Post-translationally, methylated by PrmC. Methylation increases the termination efficiency of RF1.

The protein localises to the cytoplasm. Functionally, peptide chain release factor 1 directs the termination of translation in response to the peptide chain termination codons UAG and UAA. In Agrobacterium fabrum (strain C58 / ATCC 33970) (Agrobacterium tumefaciens (strain C58)), this protein is Peptide chain release factor 1.